Reading from the N-terminus, the 564-residue chain is Phenylalanine--tRNA ligase beta subunit (564 aa).

Residues 286-362 (YFQNSLKINV…IGKGLDNFKS (77 aa)) enclose the B5 domain. Asp-340, Asp-346, Glu-349, and Glu-350 together coordinate Mg(2+).

This sequence belongs to the phenylalanyl-tRNA synthetase beta subunit family. Type 2 subfamily. Tetramer of two alpha and two beta subunits. Requires Mg(2+) as cofactor.

The protein resides in the cytoplasm. The catalysed reaction is tRNA(Phe) + L-phenylalanine + ATP = L-phenylalanyl-tRNA(Phe) + AMP + diphosphate + H(+). The polypeptide is Phenylalanine--tRNA ligase beta subunit (Borrelia recurrentis (strain A1)).